Here is a 416-residue protein sequence, read N- to C-terminus: UDP-N-acetylmuramoylalanine--D-glutamate ligase (416 aa).

108–114 is a binding site for ATP; that stretch reads GTTGKTT.

The protein belongs to the MurCDEF family.

Its subcellular location is the cytoplasm. It carries out the reaction UDP-N-acetyl-alpha-D-muramoyl-L-alanine + D-glutamate + ATP = UDP-N-acetyl-alpha-D-muramoyl-L-alanyl-D-glutamate + ADP + phosphate + H(+). It functions in the pathway cell wall biogenesis; peptidoglycan biosynthesis. Its function is as follows. Cell wall formation. Catalyzes the addition of glutamate to the nucleotide precursor UDP-N-acetylmuramoyl-L-alanine (UMA). This Chlamydia trachomatis serovar L2 (strain ATCC VR-902B / DSM 19102 / 434/Bu) protein is UDP-N-acetylmuramoylalanine--D-glutamate ligase.